Reading from the N-terminus, the 944-residue chain is Neutral alpha-glucosidase AB (944 aa).

The N-terminal stretch at 1 to 32 (MAAVAAVAARRRRSWTGLVLACLGVCLGLTLA) is a signal peptide. Cys41 and Cys47 are oxidised to a cystine. Ser52 carries the phosphoserine modification. Residue Asn97 is glycosylated (N-linked (GlcNAc...) asparagine). The tract at residues 181–225 (QRAPRVSQGSKDPAEGDGAQPEEAPGDGDKPEEIQGKAEKDEPGA) is disordered. Residues 207–225 (DGDKPEEIQGKAEKDEPGA) are compositionally biased toward basic and acidic residues. 2 residues coordinate substrate: Asp283 and Asp429. Asp542 serves as the catalytic Nucleophile. Arg602 is a substrate binding site. Asp618 serves as the catalytic Proton donor. Cysteines 633 and 644 form a disulfide. Substrate is bound at residue His676.

This sequence belongs to the glycosyl hydrolase 31 family. Heterodimer of a catalytic alpha subunit (GANAB) and a beta subunit (PRKCSH). Binds glycosylated PTPRC. Contains sialylated polysaccharide chains.

It is found in the endoplasmic reticulum. The protein localises to the golgi apparatus. It localises to the melanosome. It carries out the reaction N(4)-(alpha-D-Glc-(1-&gt;3)-alpha-D-Man-(1-&gt;2)-alpha-D-Man-(1-&gt;2)-alpha-D-Man-(1-&gt;3)-[alpha-D-Man-(1-&gt;2)-alpha-D-Man-(1-&gt;3)-[alpha-D-Man-(1-&gt;2)-alpha-D-Man-(1-&gt;6)]-alpha-D-Man-(1-&gt;6)]-beta-D-Man-(1-&gt;4)-beta-D-GlcNAc-(1-&gt;4)-beta-D-GlcNAc)-L-asparaginyl-[protein] + H2O = N(4)-(alpha-D-Man-(1-&gt;2)-alpha-D-Man-(1-&gt;2)-alpha-D-Man-(1-&gt;3)-[alpha-D-Man-(1-&gt;2)-alpha-D-Man-(1-&gt;3)-[alpha-D-Man-(1-&gt;2)-alpha-D-Man-(1-&gt;6)]-alpha-D-Man-(1-&gt;6)]-beta-D-Man-(1-&gt;4)-beta-D-GlcNAc-(1-&gt;4)-beta-D-GlcNAc)-L-asparaginyl-[protein] (N-glucan mannose isomer 9A1,2,3B1,2,3) + beta-D-glucose. It catalyses the reaction N(4)-(alpha-D-Glc-(1-&gt;3)-alpha-D-Glc-(1-&gt;3)-alpha-D-Man-(1-&gt;2)-alpha-D-Man-(1-&gt;2)-alpha-D-Man-(1-&gt;3)-[alpha-D-Man-(1-&gt;2)-alpha-D-Man-(1-&gt;3)-[alpha-D-Man-(1-&gt;2)-alpha-D-Man-(1-&gt;6)]-alpha-D-Man-(1-&gt;6)]-beta-D-Man-(1-&gt;4)-beta-D-GlcNAc-(1-&gt;4)-beta-D-GlcNAc)-L-asparaginyl-[protein] + H2O = N(4)-(alpha-D-Glc-(1-&gt;3)-alpha-D-Man-(1-&gt;2)-alpha-D-Man-(1-&gt;2)-alpha-D-Man-(1-&gt;3)-[alpha-D-Man-(1-&gt;2)-alpha-D-Man-(1-&gt;3)-[alpha-D-Man-(1-&gt;2)-alpha-D-Man-(1-&gt;6)]-alpha-D-Man-(1-&gt;6)]-beta-D-Man-(1-&gt;4)-beta-D-GlcNAc-(1-&gt;4)-beta-D-GlcNAc)-L-asparaginyl-[protein] + beta-D-glucose. It functions in the pathway glycan metabolism; N-glycan metabolism. Functionally, catalytic subunit of glucosidase II that cleaves sequentially the 2 innermost alpha-1,3-linked glucose residues from the Glc(2)Man(9)GlcNAc(2) oligosaccharide precursor of immature glycoproteins. Required for PKD1/Polycystin-1 and PKD2/Polycystin-2 maturation and localization to the cell surface and cilia. The protein is Neutral alpha-glucosidase AB (GANAB) of Sus scrofa (Pig).